The following is a 327-amino-acid chain: COP9 signalosome complex subunit 6 (327 aa).

The 134-residue stretch at 41-174 (VALHPLVILN…VSVFESVIDI (134 aa)) folds into the MPN domain. Positions 211-327 (SGENSTVAEH…IGRRMRGLFF (117 aa)) are interaction with Vpr.

Belongs to the peptidase M67A family. CSN6 subfamily. As to quaternary structure, component of the CSN complex, composed of COPS1/GPS1, COPS2, COPS3, COPS4, COPS5, COPS6, COPS7 (COPS7A or COPS7B), COPS8 and COPS9 isoform 1. In the complex, it probably interacts directly with COPS2, COPS4, COPS5, COPS7 (COPS7A or COPS7B) and COPS9 isoform 1. Interacts with the translation initiation factor EIF3S6. Interacts weakly with RBX1. Directly interacts with COP1 and 14-3-3 protein sigma/SFN. Interacts with ERCC6. (Microbial infection) Interacts with the HIV-1 protein Vpr. Widely expressed.

Its subcellular location is the nucleus. The protein resides in the cytoplasm. It localises to the perinuclear region. Component of the COP9 signalosome complex (CSN), a complex involved in various cellular and developmental processes. The CSN complex is an essential regulator of the ubiquitin (Ubl) conjugation pathway by mediating the deneddylation of the cullin subunits of SCF-type E3 ligase complexes, leading to decrease the Ubl ligase activity of SCF-type complexes such as SCF, CSA or DDB2. The complex is also involved in phosphorylation of p53/TP53, c-jun/JUN, IkappaBalpha/NFKBIA, ITPK1 and IRF8, possibly via its association with CK2 and PKD kinases. CSN-dependent phosphorylation of TP53 and JUN promotes and protects degradation by the Ubl system, respectively. Has some glucocorticoid receptor-responsive activity. Stabilizes COP1 through reducing COP1 auto-ubiquitination and decelerating COP1 turnover rate, hence regulates the ubiquitination of COP1 targets. The chain is COP9 signalosome complex subunit 6 (COPS6) from Homo sapiens (Human).